A 93-amino-acid polypeptide reads, in one-letter code: Pyrimidine/purine nucleoside phosphorylase (93 aa).

Belongs to the nucleoside phosphorylase PpnP family.

The enzyme catalyses a purine D-ribonucleoside + phosphate = a purine nucleobase + alpha-D-ribose 1-phosphate. It catalyses the reaction adenosine + phosphate = alpha-D-ribose 1-phosphate + adenine. It carries out the reaction cytidine + phosphate = cytosine + alpha-D-ribose 1-phosphate. The catalysed reaction is guanosine + phosphate = alpha-D-ribose 1-phosphate + guanine. The enzyme catalyses inosine + phosphate = alpha-D-ribose 1-phosphate + hypoxanthine. It catalyses the reaction thymidine + phosphate = 2-deoxy-alpha-D-ribose 1-phosphate + thymine. It carries out the reaction uridine + phosphate = alpha-D-ribose 1-phosphate + uracil. The catalysed reaction is xanthosine + phosphate = alpha-D-ribose 1-phosphate + xanthine. Its function is as follows. Catalyzes the phosphorolysis of diverse nucleosides, yielding D-ribose 1-phosphate and the respective free bases. Can use uridine, adenosine, guanosine, cytidine, thymidine, inosine and xanthosine as substrates. Also catalyzes the reverse reactions. The protein is Pyrimidine/purine nucleoside phosphorylase of Pseudomonas syringae pv. syringae (strain B728a).